The primary structure comprises 314 residues: DNA-directed RNA polymerase subunit alpha (314 aa).

The interval 1–228 (MIEIEKPVIE…EHLNIFVGLT (228 aa)) is alpha N-terminal domain (alpha-NTD). Positions 245–314 (KEKVLEMTIE…ELGLGLRKEE (70 aa)) are alpha C-terminal domain (alpha-CTD).

Belongs to the RNA polymerase alpha chain family. As to quaternary structure, homodimer. The RNAP catalytic core consists of 2 alpha, 1 beta, 1 beta' and 1 omega subunit. When a sigma factor is associated with the core the holoenzyme is formed, which can initiate transcription.

The enzyme catalyses RNA(n) + a ribonucleoside 5'-triphosphate = RNA(n+1) + diphosphate. Functionally, DNA-dependent RNA polymerase catalyzes the transcription of DNA into RNA using the four ribonucleoside triphosphates as substrates. The polypeptide is DNA-directed RNA polymerase subunit alpha (Halalkalibacterium halodurans (strain ATCC BAA-125 / DSM 18197 / FERM 7344 / JCM 9153 / C-125) (Bacillus halodurans)).